We begin with the raw amino-acid sequence, 221 residues long: Interleukin-12 subunit alpha (221 aa).

Residues 1–25 (MCPLRSLLLISTLVLLHHLPHLSLG) form the signal peptide. Intrachain disulfides connect cysteine 39–cysteine 112, cysteine 66–cysteine 198, and cysteine 87–cysteine 125. An N-linked (GlcNAc...) asparagine glycan is attached at asparagine 95.

The protein belongs to the IL-6 superfamily. Heterodimer with IL12B; disulfide-linked. This heterodimer is known as interleukin IL-12. Heterodimer with EBI3/IL27B; not disulfide-linked. This heterodimer is known as interleukin IL-35. Interacts with NBR1; this interaction promotes IL-12 secretion.

It is found in the secreted. Functionally, heterodimerizes with IL12B to form the IL-12 cytokine or with EBI3/IL27B to form the IL-35 cytokine. IL-12 is primarily produced by professional antigen-presenting cells (APCs) such as B-cells and dendritic cells (DCs) as well as macrophages and granulocytes and regulates T-cell and natural killer-cell responses, induces the production of interferon-gamma (IFN-gamma), favors the differentiation of T-helper 1 (Th1) cells and is an important link between innate resistance and adaptive immunity. Mechanistically, exerts its biological effects through a receptor composed of IL12R1 and IL12R2 subunits. Binding to the receptor results in the rapid tyrosine phosphorylation of a number of cellular substrates including the JAK family kinases TYK2 and JAK2. In turn, recruited STAT4 gets phosphorylated and translocates to the nucleus where it regulates cytokine/growth factor responsive genes. As part of IL-35, plays essential roles in maintaining the immune homeostasis of the liver microenvironment and also functions as an immune-suppressive cytokine. Mediates biological events through unconventional receptors composed of IL12RB2 and gp130/IL6ST heterodimers or homodimers. Signaling requires the transcription factors STAT1 and STAT4, which form a unique heterodimer that binds to distinct DNA sites. In Bubalus carabanensis (Swamp type water buffalo), this protein is Interleukin-12 subunit alpha (IL12A).